Consider the following 311-residue polypeptide: tRNA(Ile)-lysidine synthase (311 aa).

Residue 31–36 (SGGKDS) participates in ATP binding.

This sequence belongs to the tRNA(Ile)-lysidine synthase family.

Its subcellular location is the cytoplasm. It catalyses the reaction cytidine(34) in tRNA(Ile2) + L-lysine + ATP = lysidine(34) in tRNA(Ile2) + AMP + diphosphate + H(+). Its function is as follows. Ligates lysine onto the cytidine present at position 34 of the AUA codon-specific tRNA(Ile) that contains the anticodon CAU, in an ATP-dependent manner. Cytidine is converted to lysidine, thus changing the amino acid specificity of the tRNA from methionine to isoleucine. This is tRNA(Ile)-lysidine synthase from Petrotoga mobilis (strain DSM 10674 / SJ95).